The chain runs to 458 residues: O-acetyltransferase dmxR13 (458 aa).

The interval 211 to 231 is disordered; that stretch reads ELARQISQPRPPPSSDGPPPP. Positions 219 to 231 are enriched in pro residues; the sequence is PRPPPSSDGPPPP.

The protein belongs to the trichothecene 3-O-acetyltransferase family.

It functions in the pathway secondary metabolite biosynthesis. Its function is as follows. O-acetyltransferase; part of the gene cluster that mediates the biosynthesis of the dimeric xanthones cryptosporioptides. The pathway begins with the synthesis of atrochrysone thioester by the polyketide synthase dmx-nrPKS. The atrochrysone carboxyl ACP thioesterase dmxR1 then breaks the thioester bond and releases the atrochrysone carboxylic acid from dmx-nrPKS. Atrochrysone carboxylic acid is decarboxylated by the decarboxylase dmxR15, and oxidized by the anthrone oxygenase dmxR16 to yield emodin. Emodin is then reduced to emodin hydroquinone by the oxidoreductase dmxR7. A-ring reduction by the short chain dehydrogenase dmxR18, dehydration by the scytalone dehydratase-like protein dmxR17 and probable spontaneous re-oxidation, results in overall deoxygenation to chrysophanol. Baeyer-Villiger oxidation by the Baeyer-Villiger monooxygenase (BVMO) dmxR6 then yields monodictylactone in equilibrium with monodictyphenone. In the case of the cryptosporioptides biosynthesis, monodictylactone is reduced at C-12 to an alcohol (by the short chain dehydrogenases dmxR12 or dmxR8) and hydroxylated at C-5 by dmxR9, yielding the electron-rich aromatic which could eliminate H(2)O to form the ortho-quinonemethide, followed by tautomerisation to paraquinone and complete the formal reduction to produce the 10-methylgroup. Conjugate addition of C-4a-OH to the resulting paraquinone by the monooxygenase dmxR10 then gives cyclohexadienone, which is then reduced at C-5 by the short chain dehydrogenase dmxR3 to give the dihydroxanthone. The 6,7-epoxide in the cryptosporioptides could be introduced by the cytochrome P450 monooxygenase dmxL3. The highly reducing PKS dmxL2 manufactures butyrate, which is further carboxylated by dmxL1 to form ethylmalonate. It is not yet clear whether the carboxylation occurs while the butyrate is attached to the ACP of dmxL2, but this unusual fungal metabolite could then be esterified to O-5 by the O-acetyltransferase dmxR13. Finally, dimerization performed by dmxR5 gives the observed dimers cryptosporioptides A, B and C as the final products of the pathway. The sequence is that of O-acetyltransferase dmxR13 from Cryptosporiopsis sp. (strain 8999).